The chain runs to 758 residues: 5-methyltetrahydropteroyltriglutamate--homocysteine methyltransferase (758 aa).

5-methyltetrahydropteroyltri-L-glutamate-binding positions include 17-20 (RELK) and Lys-117. L-homocysteine is bound by residues 434 to 436 (IGS) and Glu-487. Residues 434–436 (IGS) and Glu-487 contribute to the L-methionine site. 5-methyltetrahydropteroyltri-L-glutamate is bound by residues 518-519 (RC) and Trp-564. Residue Asp-602 coordinates L-homocysteine. Asp-602 contacts L-methionine. Glu-608 contributes to the 5-methyltetrahydropteroyltri-L-glutamate binding site. Zn(2+)-binding residues include His-644, Cys-646, and Glu-668. The Proton donor role is filled by His-697. Cys-729 lines the Zn(2+) pocket.

This sequence belongs to the vitamin-B12 independent methionine synthase family. Zn(2+) serves as cofactor.

The enzyme catalyses 5-methyltetrahydropteroyltri-L-glutamate + L-homocysteine = tetrahydropteroyltri-L-glutamate + L-methionine. The protein operates within amino-acid biosynthesis; L-methionine biosynthesis via de novo pathway; L-methionine from L-homocysteine (MetE route): step 1/1. Functionally, catalyzes the transfer of a methyl group from 5-methyltetrahydrofolate to homocysteine resulting in methionine formation. This chain is 5-methyltetrahydropteroyltriglutamate--homocysteine methyltransferase, found in Sodalis glossinidius (strain morsitans).